The primary structure comprises 277 residues: Heme oxygenase (277 aa).

Histidine 29 provides a ligand contact to heme b.

This sequence belongs to the heme oxygenase family.

The protein localises to the microsome. Its subcellular location is the endoplasmic reticulum. It catalyses the reaction heme b + 3 reduced [NADPH--hemoprotein reductase] + 3 O2 = biliverdin IXalpha + CO + Fe(2+) + 3 oxidized [NADPH--hemoprotein reductase] + 3 H2O + H(+). Functionally, heme oxygenase cleaves the heme ring at the alpha methene bridge to form biliverdin. Biliverdin is subsequently converted to bilirubin by biliverdin reductase. Under physiological conditions, the activity of heme oxygenase is highest in the spleen, where senescent erythrocytes are sequestrated and destroyed. This Takifugu rubripes (Japanese pufferfish) protein is Heme oxygenase (hmox).